Reading from the N-terminus, the 661-residue chain is Fusaric acid cluster transcription factor FUB12 (661 aa).

Positions 17-48 (CVPCRTRKIKCNAAVVGLPCGSCVSRECPDEC) form a DNA-binding region, zn(2)-C6 fungal-type. Disordered regions lie at residues 56 to 132 (RTVK…PPGQ) and 151 to 184 (SAAQ…PQLD). Polar residues predominate over residues 73–98 (PDTNGSVLSPRQQQLPTNVSRQATDS). Residues 99–109 (SHSDPVEESIH) show a composition bias toward basic and acidic residues. Residues 110–119 (ASHTGSSLRN) are compositionally biased toward polar residues. A compositionally biased stretch (basic and acidic residues) spans 120–129 (DTPHSRDRRP).

The protein localises to the nucleus. Its function is as follows. Transcription factor that is involved in the formation of the two Fusaric acid derivatives, dehydrofusaric acid and fusarinolic acid, serving as a detoxification mechanism. The polypeptide is Fusaric acid cluster transcription factor FUB12 (Gibberella moniliformis (strain M3125 / FGSC 7600) (Maize ear and stalk rot fungus)).